The primary structure comprises 290 residues: Ribosomal RNA small subunit methyltransferase A (290 aa).

6 residues coordinate S-adenosyl-L-methionine: Asn27, Leu29, Gly54, Glu75, Asp100, and Asn125.

This sequence belongs to the class I-like SAM-binding methyltransferase superfamily. rRNA adenine N(6)-methyltransferase family. RsmA subfamily.

It localises to the cytoplasm. It catalyses the reaction adenosine(1518)/adenosine(1519) in 16S rRNA + 4 S-adenosyl-L-methionine = N(6)-dimethyladenosine(1518)/N(6)-dimethyladenosine(1519) in 16S rRNA + 4 S-adenosyl-L-homocysteine + 4 H(+). Functionally, specifically dimethylates two adjacent adenosines (A1518 and A1519) in the loop of a conserved hairpin near the 3'-end of 16S rRNA in the 30S particle. May play a critical role in biogenesis of 30S subunits. This chain is Ribosomal RNA small subunit methyltransferase A, found in Streptococcus thermophilus (strain CNRZ 1066).